Consider the following 114-residue polypeptide: Vacuolar ATPase assembly integral membrane protein VMA21 (114 aa).

Over Met1–Ser39 the chain is Cytoplasmic. Residues Val40–Phe60 traverse the membrane as a helical segment. At Ala61 to Tyr73 the chain is on the lumenal side. A helical transmembrane segment spans residues Ala74–Met94. Topologically, residues Ala95 to Arg114 are cytoplasmic. Positions Lys111–Arg114 match the Prevents secretion from ER motif.

It belongs to the VMA21 family.

The protein resides in the endoplasmic reticulum membrane. It localises to the endoplasmic reticulum-Golgi intermediate compartment membrane. Its subcellular location is the cytoplasmic vesicle. It is found in the COPII-coated vesicle membrane. Required for the assembly of the V0 complex of the vacuolar ATPase (V-ATPase) in the endoplasmic reticulum. This is Vacuolar ATPase assembly integral membrane protein VMA21 from Chaetomium globosum (strain ATCC 6205 / CBS 148.51 / DSM 1962 / NBRC 6347 / NRRL 1970) (Soil fungus).